Reading from the N-terminus, the 254-residue chain is uncharacterized protein (254 aa).

The protein belongs to the methyltransferase superfamily.

This is an uncharacterized protein from Mycobacterium tuberculosis (strain ATCC 25177 / H37Ra).